Reading from the N-terminus, the 237-residue chain is tRNA1(Val) (adenine(37)-N6)-methyltransferase (237 aa).

This sequence belongs to the methyltransferase superfamily. tRNA (adenine-N(6)-)-methyltransferase family.

The protein resides in the cytoplasm. The catalysed reaction is adenosine(37) in tRNA1(Val) + S-adenosyl-L-methionine = N(6)-methyladenosine(37) in tRNA1(Val) + S-adenosyl-L-homocysteine + H(+). Functionally, specifically methylates the adenine in position 37 of tRNA(1)(Val) (anticodon cmo5UAC). This is tRNA1(Val) (adenine(37)-N6)-methyltransferase from Tolumonas auensis (strain DSM 9187 / NBRC 110442 / TA 4).